Consider the following 780-residue polypeptide: MSKVRVYEYAKEHQVSSKKVIEALKDLGIEVANHMSTINENALRQLDNAVDGTNKKAEAPKKETTSNENGNSKGPNKPNMTNSNEKSNKPNKPAGQATKPATANKSQGAKPATNKPANTSNQTQSSGNQQQAGGQKRNNNSNRPGGGNSNRPGGNNRPNRGGNFNNKGRNTKKKGKLNHSTVPPTPPKPKELPEKIVFSESLTVAELAKKLYREPSELIKKLFMLGVVATINQSLDKDAIELICDDYGVQVEEEIKVDVTDLDVYFENELNETVDESKLVERPPVVTIMGHVDHGKTTLLDSLRNTKVTLGEAGGITQHIGAYQLEIHDKKITFLDTPGHAAFTAMRARGAQITDITILVVAADDGVMPQTIEAINHAKAAGMPIIVAVNKIDKPQANPDRVMQELTEYELVPEAWGGDTIFAPISAKFGEGLENLLDMILLVSEVEELKANPNRRAIGSVIEAELDKGRGPVATLLVQDGTLNIGDPIVVGNTFGRVRAMVNDLGRRVKKVGPSTPVEITGLNDVPQAGDRFVVFEDEKTARNIGETRASRALVAQRSATNRVSLDNLFEHMKAGEMKEVNVIIKADVQGSVEALAASLRKIDVEGVNVKIIHTAVGAINESDITLAAASNAIVIGFNVRPTAQAREAAENESVDIRLHRVIYKAIDEIEAAMKGMLDPEFQEKIIGQAQVRQTINVSKVGTIAGCYVTDGKITRDSGVRIIRDGIVVFEGEIATLKRFKDDAKEVAKGYECGITVQNFNDIKEDDVIEAYVMEEIERK.

Positions 44-194 (RQLDNAVDGT…TPPKPKELPE (151 aa)) are disordered. Basic and acidic residues predominate over residues 53–65 (TNKKAEAPKKETT). Polar residues predominate over residues 66 to 81 (SNENGNSKGPNKPNMT). Low complexity-rich tracts occupy residues 82 to 93 (NSNEKSNKPNKP) and 117 to 168 (ANTS…NNKG). Positions 281-450 (ERPPVVTIMG…LLVSEVEELK (170 aa)) constitute a tr-type G domain. The tract at residues 290–297 (GHVDHGKT) is G1. 290-297 (GHVDHGKT) contributes to the GTP binding site. The interval 315–319 (GITQH) is G2. The tract at residues 336–339 (DTPG) is G3. GTP is bound by residues 336 to 340 (DTPGH) and 390 to 393 (NKID). Residues 390-393 (NKID) form a G4 region. Residues 426–428 (SAK) are G5.

This sequence belongs to the TRAFAC class translation factor GTPase superfamily. Classic translation factor GTPase family. IF-2 subfamily.

It is found in the cytoplasm. Functionally, one of the essential components for the initiation of protein synthesis. Protects formylmethionyl-tRNA from spontaneous hydrolysis and promotes its binding to the 30S ribosomal subunits. Also involved in the hydrolysis of GTP during the formation of the 70S ribosomal complex. This chain is Translation initiation factor IF-2, found in Listeria welshimeri serovar 6b (strain ATCC 35897 / DSM 20650 / CCUG 15529 / CIP 8149 / NCTC 11857 / SLCC 5334 / V8).